Consider the following 102-residue polypeptide: Aspartyl/glutamyl-tRNA(Asn/Gln) amidotransferase subunit C (102 aa).

Belongs to the GatC family. As to quaternary structure, heterotrimer of A, B and C subunits.

The catalysed reaction is L-glutamyl-tRNA(Gln) + L-glutamine + ATP + H2O = L-glutaminyl-tRNA(Gln) + L-glutamate + ADP + phosphate + H(+). The enzyme catalyses L-aspartyl-tRNA(Asn) + L-glutamine + ATP + H2O = L-asparaginyl-tRNA(Asn) + L-glutamate + ADP + phosphate + 2 H(+). Its function is as follows. Allows the formation of correctly charged Asn-tRNA(Asn) or Gln-tRNA(Gln) through the transamidation of misacylated Asp-tRNA(Asn) or Glu-tRNA(Gln) in organisms which lack either or both of asparaginyl-tRNA or glutaminyl-tRNA synthetases. The reaction takes place in the presence of glutamine and ATP through an activated phospho-Asp-tRNA(Asn) or phospho-Glu-tRNA(Gln). This is Aspartyl/glutamyl-tRNA(Asn/Gln) amidotransferase subunit C from Bordetella parapertussis (strain 12822 / ATCC BAA-587 / NCTC 13253).